The sequence spans 127 residues: MAKPTRKRRVKKNIESGIAHIHATFNNTIVMITDVHGNAVAWSSAGALGFKGSRKSTPFAAQMASEAAAKSAQEHGLKTVEVTVKGPGSGRESAIRALAAAGLEVTAIRDVTPVPHNGARPPKRRRV.

The protein belongs to the universal ribosomal protein uS11 family. Part of the 30S ribosomal subunit. Interacts with proteins S7 and S18. Binds to IF-3.

Functionally, located on the platform of the 30S subunit, it bridges several disparate RNA helices of the 16S rRNA. Forms part of the Shine-Dalgarno cleft in the 70S ribosome. This is Small ribosomal subunit protein uS11 from Streptococcus thermophilus (strain CNRZ 1066).